The sequence spans 160 residues: MAEKTYPMTQVEKDQLEKELEELKLVRRPEVVERIKIARSYGDLSENSEYDAAKDEQAFVEGQIQILETKIRYAEIIDSDAVAKDEVAIGKTVLVQEVGTNDKDTYHIVGAAGADIFSGKISNESPIAHALIGKKTGDLATIESPAGSYQVEIISVEKTN.

A coiled-coil region spans residues 1–72 (MAEKTYPMTQ…QIQILETKIR (72 aa)).

This sequence belongs to the GreA/GreB family.

Functionally, necessary for efficient RNA polymerase transcription elongation past template-encoded arresting sites. The arresting sites in DNA have the property of trapping a certain fraction of elongating RNA polymerases that pass through, resulting in locked ternary complexes. Cleavage of the nascent transcript by cleavage factors such as GreA or GreB allows the resumption of elongation from the new 3'terminus. GreA releases sequences of 2 to 3 nucleotides. The chain is Transcription elongation factor GreA from Streptococcus agalactiae serotype Ia (strain ATCC 27591 / A909 / CDC SS700).